Consider the following 230-residue polypeptide: Ureidoacrylate amidohydrolase RutB (230 aa).

Asp-23 acts as the Proton acceptor in catalysis. The active site involves Lys-132. The Nucleophile role is filled by Cys-165.

The protein belongs to the isochorismatase family. RutB subfamily.

It carries out the reaction (Z)-3-ureidoacrylate + H2O + H(+) = (Z)-3-aminoacrylate + NH4(+) + CO2. The enzyme catalyses (Z)-3-ureidoacrylate + H2O = (Z)-3-aminoacrylate + carbamate + H(+). The catalysed reaction is (Z)-2-methylureidoacrylate + H2O + H(+) = (Z)-2-methylaminoacrylate + NH4(+) + CO2. Hydrolyzes ureidoacrylate to form aminoacrylate and carbamate. The carbamate hydrolyzes spontaneously, thereby releasing one of the nitrogen atoms of the pyrimidine ring as ammonia and one of its carbon atoms as CO2. In Yersinia enterocolitica serotype O:8 / biotype 1B (strain NCTC 13174 / 8081), this protein is Ureidoacrylate amidohydrolase RutB.